The sequence spans 614 residues: Zinc finger protein 276 (614 aa).

The segment at 1 to 50 is disordered; sequence MKRDRLGRFLSPGSSRQCGASDGGGGVSRTRGRPSLSGGPRVDGATARRA. The ZAD domain maps to 77–163; that stretch reads GHCRLCHGKF…LQRVNASPAG (87 aa). Zn(2+)-binding residues include Cys-79, Cys-82, Cys-136, and Cys-139. The disordered stretch occupies residues 268 to 420; sequence APRLPQHRGW…KKPGPKPGWK (153 aa). The segment covering 357–369 has biased composition (acidic residues); sequence SDLSEGDVLSEDE. Residues 386–408 are compositionally biased toward basic and acidic residues; the sequence is YPERKVSGKKSESKEAKKSEEPR. The segment covering 409–420 has biased composition (basic residues); that stretch reads IRKKPGPKPGWK. 5 consecutive C2H2-type zinc fingers follow at residues 434–458, 465–490, 496–518, 524–546, and 554–577; these read YKCPYQGCTAVYRGADGMKKHIKEH, RPCPHPGCNKVFMIDRYLQRHVKLIH, YICDECGQTFKQRKHLLVHQMRH, LQCEVCGFQCRQRASLKYHMTKH, and FACDQCGRRFEKAHNLNVHMSMVH. Residues 583 to 614 are disordered; the sequence is QDKALPLEAEPPPGPPSPSVTTEGQAVKPEPT. A compositionally biased stretch (pro residues) spans 591 to 600; that stretch reads AEPPPGPPSP.

Its subcellular location is the nucleus. It localises to the chromosome. The protein localises to the centromere. The protein resides in the kinetochore. Functionally, may be involved in transcriptional regulation. This is Zinc finger protein 276 (ZNF276) from Homo sapiens (Human).